Here is a 591-residue protein sequence, read N- to C-terminus: V-type ATP synthase alpha chain (591 aa).

Residue 233-240 (GPFGAGKT) participates in ATP binding.

Belongs to the ATPase alpha/beta chains family.

It catalyses the reaction ATP + H2O + 4 H(+)(in) = ADP + phosphate + 5 H(+)(out). In terms of biological role, produces ATP from ADP in the presence of a proton gradient across the membrane. The V-type alpha chain is a catalytic subunit. The sequence is that of V-type ATP synthase alpha chain from Streptococcus pneumoniae (strain Hungary19A-6).